The primary structure comprises 179 residues: uncharacterized protein (179 aa).

Residues 1–14 (MTKKVKLDQDEINN) show a composition bias toward basic and acidic residues. 2 disordered regions span residues 1–90 (MTKK…NNFC) and 121–147 (HKKS…DKKV). Composition is skewed to low complexity over residues 15–90 (KNKN…NNFC) and 126–137 (RSQSQSSLNSFD). Positions 138-147 (QDNKSKDKKV) are enriched in basic and acidic residues.

This is an uncharacterized protein from Dictyostelium discoideum (Social amoeba).